The primary structure comprises 288 residues: 4-diphosphocytidyl-2-C-methyl-D-erythritol kinase (288 aa).

The active site involves lysine 10. 99 to 109 serves as a coordination point for ATP; sequence PMGGGLGGGSS. Aspartate 141 is a catalytic residue.

The protein belongs to the GHMP kinase family. IspE subfamily. Homodimer.

The catalysed reaction is 4-CDP-2-C-methyl-D-erythritol + ATP = 4-CDP-2-C-methyl-D-erythritol 2-phosphate + ADP + H(+). It participates in isoprenoid biosynthesis; isopentenyl diphosphate biosynthesis via DXP pathway; isopentenyl diphosphate from 1-deoxy-D-xylulose 5-phosphate: step 3/6. In terms of biological role, catalyzes the phosphorylation of the position 2 hydroxy group of 4-diphosphocytidyl-2C-methyl-D-erythritol. This Serratia proteamaculans (strain 568) protein is 4-diphosphocytidyl-2-C-methyl-D-erythritol kinase.